Consider the following 271-residue polypeptide: HTH-type transcriptional repressor AllR (271 aa).

In terms of domain architecture, HTH iclR-type spans 21-83; the sequence is AQALERGIAI…SQLGWWHIGL (63 aa). Residues 43 to 62 constitute a DNA-binding region (H-T-H motif); it reads VSDISLNLDLPLSTTFRLLK. The IclR-ED domain occupies 98–267; sequence VLSVAGPFMR…ARDISTALGL (170 aa). Glyoxylate is bound by residues 154–156, D207, C217, and 234–236; these read SGA and SIS.

Functionally, negative regulator of allantoin and glyoxylate utilization operons. Binds to the gcl promoter and to the allS-allA intergenic region. This Escherichia coli O6:H1 (strain CFT073 / ATCC 700928 / UPEC) protein is HTH-type transcriptional repressor AllR (allR).